Reading from the N-terminus, the 133-residue chain is Alcohol dehydrogenase, 15 kDa subunit (133 aa).

A signal peptide spans 1–24; sequence MFRRIVPVLGLALGLGLASQAAMA. Residues 23–43 are disordered; the sequence is MAQEQSPPPPPAVQGTPGKDF. A Pyrrolidone carboxylic acid modification is found at glutamine 25.

The alcohol dehydrogenase multicomponent enzyme system is composed of a dehydrogenase subunit I (AdhA), a cytochrome c subunit II (AdhB) and a subunit III (AdhS).

It localises to the cell membrane. Part of the alcohol dehydrogenase multicomponent enzyme system which is involved in the production of acetic acid and in the ethanol oxidase respiratory chain. Does not play an obligatory role for the alcohol dehydrogenase (ADH) activity. The polypeptide is Alcohol dehydrogenase, 15 kDa subunit (Gluconobacter oxydans (strain 621H) (Gluconobacter suboxydans)).